Consider the following 261-residue polypeptide: uncharacterized protein (261 aa).

The N-terminal stretch at 1–22 (MIHSKKLTLGICLVLLIILIGG) is a signal peptide. A lipid anchor (N-palmitoyl cysteine) is attached at C23. Residue C23 is the site of S-diacylglycerol cysteine attachment.

This sequence belongs to the staphylococcal tandem lipoprotein family.

The protein resides in the cell membrane. This is an uncharacterized protein from Staphylococcus aureus (strain NCTC 8325 / PS 47).